The primary structure comprises 553 residues: General alpha-glucoside permease (553 aa).

Residues 1–21 are compositionally biased toward polar residues; it reads MSVDENQLENGQLLSSENEAS. The interval 1 to 26 is disordered; that stretch reads MSVDENQLENGQLLSSENEASSPFKE. Topologically, residues 1 to 33 are cytoplasmic; that stretch reads MSVDENQLENGQLLSSENEASSPFKESIPSRSS. A helical membrane pass occupies residues 34-54; that stretch reads LYLIALTVSLLGVQLTWSVEL. The Extracellular portion of the chain corresponds to 55–72; that stretch reads GYGTPYLFSLGLRKEWTS. The chain crosses the membrane as a helical span at residues 73–93; sequence IIWIAGPLTGILIQPIAGILS. Residues 94-111 are Cytoplasmic-facing; the sequence is DRVNSRIGRRRPFMLCAS. Residues 112 to 132 form a helical membrane-spanning segment; that stretch reads LLGTFSLFLMGWAPDICLFIF. The Extracellular portion of the chain corresponds to 133-140; that stretch reads SNEVLMKR. The chain crosses the membrane as a helical span at residues 141 to 161; that stretch reads VTIVLATISIYLLDVAVNVVM. Topologically, residues 162–186 are cytoplasmic; it reads ASTRSLIVDSVRSDQQHEANSWAGR. The helical transmembrane segment at 187-207 threads the bilayer; the sequence is MIGVGNVLGYLLGYLPLYRIF. Over 208–216 the chain is Extracellular; sequence SFLNFTQLQ. Residues 217 to 237 traverse the membrane as a helical segment; that stretch reads VFCVLASISLVLTVTITTIFV. The Cytoplasmic segment spans residues 238-280; sequence SERRFPPVEHEKSVAGEIFEFFTTMRQSITALPFTLKRICFVQ. A helical transmembrane segment spans residues 281–301; sequence FFAYFGWFPFLFYITTYVGIL. At 302 to 322 the chain is on the extracellular side; sequence YLRHAPKGHEEDWDMATRQGS. Residues 323–343 traverse the membrane as a helical segment; it reads FALLLFAIISLAANTALPLLL. Topologically, residues 344 to 424 are cytoplasmic; the sequence is EDTEDDEEDE…SKVQIKGLTL (81 aa). Positions 368-399 are disordered; the sequence is NDLGNIRTGTNTPRLGNLSETTSFRSENEPSR. The span at 374–392 shows a compositional bias: polar residues; sequence RTGTNTPRLGNLSETTSFR. Residues 425 to 445 traverse the membrane as a helical segment; sequence PILWLSSHVLFGVCMLSTIFL. At 446–452 the chain is on the extracellular side; that stretch reads QTSWQAQ. Residues 453–473 traverse the membrane as a helical segment; the sequence is AMVAICGLSWACTLWIPYSLF. Topologically, residues 474-494 are cytoplasmic; it reads SSEIGKLGLRESSGKMIGVHN. The chain crosses the membrane as a helical span at residues 495–515; it reads VFISAPQVLSTIIATIVFIQS. The Extracellular portion of the chain corresponds to 516-521; that stretch reads EGSHRD. Residues 522 to 542 form a helical membrane-spanning segment; the sequence is IADNSIAWVLRIGGISAFLAA. The Cytoplasmic portion of the chain corresponds to 543–553; that stretch reads YQCRHLLPINF.

The protein belongs to the glycoside-pentoside-hexuronide (GPH) cation symporter transporter (TC 2.A.2.4) family.

The protein localises to the membrane. In terms of biological role, responsible for the transport of maltose and sucrose into the cell, with the concomitant uptake of protons (symport system). The sequence is that of General alpha-glucoside permease (sut1) from Schizosaccharomyces pombe (strain 972 / ATCC 24843) (Fission yeast).